Consider the following 263-residue polypeptide: Small ribosomal subunit protein uS2 (263 aa).

Residues 230–249 (GEALVNEEKEITDEEKKEVL) are compositionally biased toward basic and acidic residues. The disordered stretch occupies residues 230 to 263 (GEALVNEEKEITDEEKKEVLDEAMSEEDFGEEQE). The span at 250–263 (DEAMSEEDFGEEQE) shows a compositional bias: acidic residues.

The protein belongs to the universal ribosomal protein uS2 family.

The sequence is that of Small ribosomal subunit protein uS2 from Campylobacter jejuni subsp. jejuni serotype O:2 (strain ATCC 700819 / NCTC 11168).